The sequence spans 523 residues: 2-isopropylmalate synthase (523 aa).

Residues 5–267 enclose the Pyruvate carboxyltransferase domain; the sequence is VIIFDTTLRD…HTNINHHEIW (263 aa). Mn(2+) contacts are provided by D14, H202, H204, and N238. A regulatory domain region spans residues 392–523; it reads RLDYFSVQSG…QNKENNKETV (132 aa).

It belongs to the alpha-IPM synthase/homocitrate synthase family. LeuA type 1 subfamily. Homodimer. Requires Mn(2+) as cofactor.

It is found in the cytoplasm. It catalyses the reaction 3-methyl-2-oxobutanoate + acetyl-CoA + H2O = (2S)-2-isopropylmalate + CoA + H(+). Its pathway is amino-acid biosynthesis; L-leucine biosynthesis; L-leucine from 3-methyl-2-oxobutanoate: step 1/4. In terms of biological role, catalyzes the condensation of the acetyl group of acetyl-CoA with 3-methyl-2-oxobutanoate (2-ketoisovalerate) to form 3-carboxy-3-hydroxy-4-methylpentanoate (2-isopropylmalate). The polypeptide is 2-isopropylmalate synthase (Salmonella typhi).